A 193-amino-acid chain; its full sequence is MDTIVIAGLGNPGSKYQWTRHNAGFLFLDRIAQLEGLSIVRKQFGGLTAEWERKGKRLVLLKPQTFMNLSGRSVMPALQFYKLKPDQLIVVHDEIDLALGAARLKQGGGHGGQNGLRSIMELLGKGDFVRLRLGIGRPPHGDVTNHVLGVFTPPEMEIFARVLDGALDMLETALDEGVPKAMSLFNNKSYLEG.

Tyrosine 16 provides a ligand contact to tRNA. The Proton acceptor role is filled by histidine 21. Phenylalanine 66, asparagine 68, and asparagine 114 together coordinate tRNA.

The protein belongs to the PTH family. Monomer.

Its subcellular location is the cytoplasm. The enzyme catalyses an N-acyl-L-alpha-aminoacyl-tRNA + H2O = an N-acyl-L-amino acid + a tRNA + H(+). Functionally, hydrolyzes ribosome-free peptidyl-tRNAs (with 1 or more amino acids incorporated), which drop off the ribosome during protein synthesis, or as a result of ribosome stalling. Its function is as follows. Catalyzes the release of premature peptidyl moieties from peptidyl-tRNA molecules trapped in stalled 50S ribosomal subunits, and thus maintains levels of free tRNAs and 50S ribosomes. This chain is Peptidyl-tRNA hydrolase, found in Trichlorobacter lovleyi (strain ATCC BAA-1151 / DSM 17278 / SZ) (Geobacter lovleyi).